A 509-amino-acid polypeptide reads, in one-letter code: MEVLAEPRWPPGLAVMKTIDDLLRCGICFEYFNIAVIIPQCSHNYCSLCIRKFLSYKTQCPTCCVAVTEPDLRNNRLLDELVKSMNFARTHLLQFALESPPISPVSSTSKKVVVKVHNADAAQHPVKQANRLMDKFLIRETGDCVFELLGKENERKFSPQKELSTSAEIKETSLLGKPVLGLSDANGPVTPSTSTMKLDTKVSCPVCGVSIPENHINKHLDSCLSREEKKESLRSSAHKRKPLPKTVYNLLSDRDLKKKLKQYGLSVQGNKQQLIKRHQEFVHMYNAQCDALHPKSAAEIVQEIESMEKTRMRLEASKLNENVMVFTKNQTEKEIEEVHSEYRKKHQNAFQLLVDQAKKGYKKTGRVSQAAAMRTDEPAETLPSMRTDEPAETLPSMRTDEPAETLPLMRADEPAETLPSECIAQEDNVSFSDTVSVTNHFPQPQLDSPGPSEPERPDDSSSCTDILFSSDSDSCNRNDQNREVSPQQTRRTRASECVEIEPRNKRNKN.

Met-1 is subject to N-acetylmethionine. An RING-type zinc finger spans residues Cys-25 to Cys-64. Phosphoserine occurs at positions 99, 103, 158, and 164. The UBZ4-type zinc-finger motif lies at Lys-201 to Glu-228. Zn(2+) contacts are provided by Cys-204, Cys-207, His-219, and Cys-223. The short motif at Ser-232–Arg-240 is the LR motif element. An SAP domain is found at Tyr-248–Val-282. 2 disordered regions span residues Gly-365–Glu-401 and Val-435–Asn-509. 2 stretches are compositionally biased toward polar residues: residues Val-435–Leu-446 and Cys-463–Asp-473. Residue Ser-485 is modified to Phosphoserine. A compositionally biased stretch (basic and acidic residues) spans Arg-493–Asn-509.

The protein belongs to the RAD18 family. Homodimer. Interacts with UBE2A and UBE2B, one homodimer binding one molecule of UBE2B. Interacts with HLTF. Interacts with SHPRH. Interacts with SPRTN; leading to enhance chromatin association of RAD18 and RAD18-mediated PCNA ubiquitination and translesion DNA synthesis. Interacts (via C-terminus and phosphorylated form) with SLF1 (via BRCT domains); this interaction is required for efficient repair of UV-induced DNA damage. Interacts with SLF2. Interacts with SMC5; this interaction is increased in a SLF1 or SLF2-dependent manner. In terms of tissue distribution, expressed in thymus, spleen, brain, and ovary.

The protein localises to the nucleus. It is found in the cytoplasm. It localises to the cytoskeleton. The protein resides in the microtubule organizing center. Its subcellular location is the centrosome. It carries out the reaction S-ubiquitinyl-[E2 ubiquitin-conjugating enzyme]-L-cysteine + [acceptor protein]-L-lysine = [E2 ubiquitin-conjugating enzyme]-L-cysteine + N(6)-ubiquitinyl-[acceptor protein]-L-lysine.. It functions in the pathway protein modification; protein ubiquitination. E3 ubiquitin-protein ligase involved in postreplication repair of UV-damaged DNA. Postreplication repair functions in gap-filling of a daughter strand on replication of damaged DNA. Associates to the E2 ubiquitin conjugating enzyme UBE2B to form the UBE2B-RAD18 ubiquitin ligase complex involved in mono-ubiquitination of DNA-associated PCNA on 'Lys-164'. Has ssDNA binding activity. This chain is E3 ubiquitin-protein ligase RAD18 (Rad18), found in Mus musculus (Mouse).